We begin with the raw amino-acid sequence, 201 residues long: Dephospho-CoA kinase (201 aa).

The DPCK domain maps to Ala-4–Met-201. Ala-12–Thr-17 lines the ATP pocket.

This sequence belongs to the CoaE family.

It is found in the cytoplasm. The catalysed reaction is 3'-dephospho-CoA + ATP = ADP + CoA + H(+). It participates in cofactor biosynthesis; coenzyme A biosynthesis; CoA from (R)-pantothenate: step 5/5. Functionally, catalyzes the phosphorylation of the 3'-hydroxyl group of dephosphocoenzyme A to form coenzyme A. This is Dephospho-CoA kinase from Campylobacter jejuni (strain RM1221).